A 399-amino-acid chain; its full sequence is Methylthioribose kinase (399 aa).

ATP-binding positions include N40, K57, and 111–113; that span reads EDL. Residue D229 coordinates substrate. 246–248 serves as a coordination point for ATP; it reads DAE. R344 contributes to the substrate binding site.

It belongs to the methylthioribose kinase family. Homodimer.

The catalysed reaction is 5-(methylsulfanyl)-D-ribose + ATP = 5-(methylsulfanyl)-alpha-D-ribose 1-phosphate + ADP + H(+). It participates in amino-acid biosynthesis; L-methionine biosynthesis via salvage pathway; S-methyl-5-thio-alpha-D-ribose 1-phosphate from S-methyl-5'-thioadenosine (hydrolase route): step 2/2. In terms of biological role, catalyzes the phosphorylation of methylthioribose into methylthioribose-1-phosphate. The sequence is that of Methylthioribose kinase from Yersinia enterocolitica serotype O:8 / biotype 1B (strain NCTC 13174 / 8081).